The chain runs to 224 residues: Ribosomal RNA small subunit methyltransferase I (224 aa).

Belongs to the methyltransferase superfamily. RsmI family.

The protein localises to the cytoplasm. The catalysed reaction is cytidine(1402) in 16S rRNA + S-adenosyl-L-methionine = 2'-O-methylcytidine(1402) in 16S rRNA + S-adenosyl-L-homocysteine + H(+). Its function is as follows. Catalyzes the 2'-O-methylation of the ribose of cytidine 1402 (C1402) in 16S rRNA. The chain is Ribosomal RNA small subunit methyltransferase I from Borrelia garinii subsp. bavariensis (strain ATCC BAA-2496 / DSM 23469 / PBi) (Borreliella bavariensis).